Reading from the N-terminus, the 251-residue chain is Ubiquinone/menaquinone biosynthesis C-methyltransferase UbiE (251 aa).

Residues threonine 74, aspartate 95, and asparagine 123–alanine 124 each bind S-adenosyl-L-methionine.

Belongs to the class I-like SAM-binding methyltransferase superfamily. MenG/UbiE family.

It carries out the reaction a 2-demethylmenaquinol + S-adenosyl-L-methionine = a menaquinol + S-adenosyl-L-homocysteine + H(+). The catalysed reaction is a 2-methoxy-6-(all-trans-polyprenyl)benzene-1,4-diol + S-adenosyl-L-methionine = a 5-methoxy-2-methyl-3-(all-trans-polyprenyl)benzene-1,4-diol + S-adenosyl-L-homocysteine + H(+). The protein operates within quinol/quinone metabolism; menaquinone biosynthesis; menaquinol from 1,4-dihydroxy-2-naphthoate: step 2/2. It participates in cofactor biosynthesis; ubiquinone biosynthesis. Methyltransferase required for the conversion of demethylmenaquinol (DMKH2) to menaquinol (MKH2) and the conversion of 2-polyprenyl-6-methoxy-1,4-benzoquinol (DDMQH2) to 2-polyprenyl-3-methyl-6-methoxy-1,4-benzoquinol (DMQH2). In Shewanella baltica (strain OS155 / ATCC BAA-1091), this protein is Ubiquinone/menaquinone biosynthesis C-methyltransferase UbiE.